A 443-amino-acid polypeptide reads, in one-letter code: Multidrug resistance protein MdtA (443 aa).

Positions 1-24 are cleaved as a signal peptide; sequence MKAQSKRTSRLLILLGIAVAIIVA. Polar residues predominate over residues 36-46; sequence DGSTGAQQHAV. Disordered stretches follow at residues 36 to 57 and 398 to 443; these read DGST…GGRR and TPRS…AEKS. Residues 409 to 419 show a composition bias toward basic and acidic residues; sequence AAEKPATAEKA. A compositionally biased stretch (low complexity) spans 427–443; the sequence is SATGASAGSTTTAAEKS.

The protein belongs to the membrane fusion protein (MFP) (TC 8.A.1) family. In terms of assembly, part of a tripartite efflux system composed of MdtA, MdtB and MdtC.

Its subcellular location is the cell inner membrane. The protein is Multidrug resistance protein MdtA of Yersinia enterocolitica serotype O:8 / biotype 1B (strain NCTC 13174 / 8081).